We begin with the raw amino-acid sequence, 410 residues long: 2-oxoisovalerate dehydrogenase subunit alpha (410 aa).

Belongs to the BCKDHA family. In terms of assembly, heterodimer of an alpha and a beta chain. The cofactor is thiamine diphosphate.

It carries out the reaction N(6)-[(R)-lipoyl]-L-lysyl-[protein] + 3-methyl-2-oxobutanoate + H(+) = N(6)-[(R)-S(8)-2-methylpropanoyldihydrolipoyl]-L-lysyl-[protein] + CO2. The branched-chain alpha-keto dehydrogenase complex catalyzes the overall conversion of alpha-keto acids to acyl-CoA and CO(2). It contains multiple copies of three enzymatic components: branched-chain alpha-keto acid decarboxylase (E1), lipoamide acyltransferase (E2) and lipoamide dehydrogenase (E3). This is 2-oxoisovalerate dehydrogenase subunit alpha (bkdA1) from Pseudomonas aeruginosa (strain ATCC 15692 / DSM 22644 / CIP 104116 / JCM 14847 / LMG 12228 / 1C / PRS 101 / PAO1).